Here is a 268-residue protein sequence, read N- to C-terminus: Ribosomal RNA small subunit methyltransferase A (268 aa).

S-adenosyl-L-methionine contacts are provided by N23, I25, G50, E72, D97, and N116.

The protein belongs to the class I-like SAM-binding methyltransferase superfamily. rRNA adenine N(6)-methyltransferase family. RsmA subfamily.

Its subcellular location is the cytoplasm. The catalysed reaction is adenosine(1518)/adenosine(1519) in 16S rRNA + 4 S-adenosyl-L-methionine = N(6)-dimethyladenosine(1518)/N(6)-dimethyladenosine(1519) in 16S rRNA + 4 S-adenosyl-L-homocysteine + 4 H(+). Functionally, specifically dimethylates two adjacent adenosines (A1518 and A1519) in the loop of a conserved hairpin near the 3'-end of 16S rRNA in the 30S particle. May play a critical role in biogenesis of 30S subunits. The protein is Ribosomal RNA small subunit methyltransferase A of Rickettsia bellii (strain RML369-C).